The following is a 115-amino-acid chain: Nitrogenase-stabilizing/protective protein NifW (115 aa).

The protein belongs to the NifW family. In terms of assembly, homotrimer; associates with NifD.

May protect the nitrogenase Fe-Mo protein from oxidative damage. The protein is Nitrogenase-stabilizing/protective protein NifW of Stutzerimonas stutzeri (strain A1501) (Pseudomonas stutzeri).